An 87-amino-acid chain; its full sequence is MDKARKLEIIKQYGRSEGDTGSPEVQIALLTERINSLTGHLKVHKKDHHSRRGLLMMVGHRRGLLNYLADQDIERYRTIIKQLGLRR.

This sequence belongs to the universal ribosomal protein uS15 family. As to quaternary structure, part of the 30S ribosomal subunit. Forms a bridge to the 50S subunit in the 70S ribosome, contacting the 23S rRNA.

Its function is as follows. One of the primary rRNA binding proteins, it binds directly to 16S rRNA where it helps nucleate assembly of the platform of the 30S subunit by binding and bridging several RNA helices of the 16S rRNA. Forms an intersubunit bridge (bridge B4) with the 23S rRNA of the 50S subunit in the ribosome. This chain is Small ribosomal subunit protein uS15, found in Clostridium botulinum (strain Eklund 17B / Type B).